The primary structure comprises 99 residues: Aspartyl/glutamyl-tRNA(Asn/Gln) amidotransferase subunit C (99 aa).

Belongs to the GatC family. As to quaternary structure, heterotrimer of A, B and C subunits.

The catalysed reaction is L-glutamyl-tRNA(Gln) + L-glutamine + ATP + H2O = L-glutaminyl-tRNA(Gln) + L-glutamate + ADP + phosphate + H(+). The enzyme catalyses L-aspartyl-tRNA(Asn) + L-glutamine + ATP + H2O = L-asparaginyl-tRNA(Asn) + L-glutamate + ADP + phosphate + 2 H(+). Functionally, allows the formation of correctly charged Asn-tRNA(Asn) or Gln-tRNA(Gln) through the transamidation of misacylated Asp-tRNA(Asn) or Glu-tRNA(Gln) in organisms which lack either or both of asparaginyl-tRNA or glutaminyl-tRNA synthetases. The reaction takes place in the presence of glutamine and ATP through an activated phospho-Asp-tRNA(Asn) or phospho-Glu-tRNA(Gln). The chain is Aspartyl/glutamyl-tRNA(Asn/Gln) amidotransferase subunit C from Corynebacterium diphtheriae (strain ATCC 700971 / NCTC 13129 / Biotype gravis).